The chain runs to 267 residues: Membrane-spanning 4-domains subfamily A member 12 (267 aa).

Topologically, residues 1-91 (MMSSKPTSHA…MNFKEEAKAL (91 aa)) are cytoplasmic. A helical membrane pass occupies residues 92–112 (GVIQIMVGLMHIGFGIVLCLI). The Extracellular portion of the chain corresponds to 113-120 (SFSFREVL). A helical transmembrane segment spans residues 121–141 (GFASTAVIGGYPFWGGLSFII). Residues 142–160 (SGSLSVSASKELSRCLVKG) lie on the Cytoplasmic side of the membrane. A helical membrane pass occupies residues 161-181 (SLGMNIVSSILAFIGVILLLV). Residues 182-200 (DMCINGVAGQDYWAVLSGK) lie on the Extracellular side of the membrane. The helical transmembrane segment at 201-221 (GISATLMIFSLLEFFVACATA) threads the bilayer. Topologically, residues 222–267 (HFANQANTTTNMSVLVIPNMYESNPVTPASSSAPPRCNNYSANAPK) are cytoplasmic. The tract at residues 248–267 (TPASSSAPPRCNNYSANAPK) is disordered.

This sequence belongs to the MS4A family.

It is found in the membrane. In terms of biological role, may be involved in signal transduction as a component of a multimeric receptor complex. The sequence is that of Membrane-spanning 4-domains subfamily A member 12 (MS4A12) from Homo sapiens (Human).